Consider the following 37-residue polypeptide: Cytochrome b6-f complex subunit 5 (37 aa).

Residues 5–25 (LLSGIVLGLIPITLAGLFVTA) form a helical membrane-spanning segment.

This sequence belongs to the PetG family. In terms of assembly, the 4 large subunits of the cytochrome b6-f complex are cytochrome b6, subunit IV (17 kDa polypeptide, PetD), cytochrome f and the Rieske protein, while the 4 small subunits are PetG, PetL, PetM and PetN. The complex functions as a dimer.

It localises to the plastid. It is found in the chloroplast thylakoid membrane. Its function is as follows. Component of the cytochrome b6-f complex, which mediates electron transfer between photosystem II (PSII) and photosystem I (PSI), cyclic electron flow around PSI, and state transitions. PetG is required for either the stability or assembly of the cytochrome b6-f complex. This is Cytochrome b6-f complex subunit 5 from Zygnema circumcarinatum (Green alga).